Reading from the N-terminus, the 500-residue chain is Endothelial lipase (500 aa).

Residues 1 to 20 form the signal peptide; the sequence is MSNSVPLLCFWSLCYCFAAG. Cysteines 64 and 77 form a disulfide. 2 N-linked (GlcNAc...) asparagine glycosylation sites follow: Asn-80 and Asn-136. Ser-169 functions as the Nucleophile in the catalytic mechanism. Asp-193 (charge relay system) is an active-site residue. Cys-252 and Cys-272 form a disulfide bridge. Residue His-274 is the Charge relay system of the active site. 2 disulfide bridges follow: Cys-297/Cys-316 and Cys-308/Cys-311. Residue 325–337 coordinates heparin; it reads KMRNKRNSKMYLK. Residues 347-482 enclose the PLAT domain; sequence YHYQMKIHVF…SPGRELWFRK (136 aa). N-linked (GlcNAc...) asparagine glycans are attached at residues Asn-393, Asn-469, and Asn-491. Residues Cys-463 and Cys-483 are joined by a disulfide bond.

It belongs to the AB hydrolase superfamily. Lipase family. In terms of assembly, head to tail homodimer. High level of expression in the liver, placenta, lung, thyroid, kidney, testis and in the corpus luteum of the ovary. Expressed also in coronary artery endothelial cells, umbilical vein endothelial cells and in hepatocytes and osteosarcoma cell lines. Not detected in heart, brain and muscle.

The protein resides in the secreted. It catalyses the reaction a triacylglycerol + H2O = a diacylglycerol + a fatty acid + H(+). The enzyme catalyses a 1,2-diacyl-sn-glycero-3-phosphocholine + H2O = a 2-acyl-sn-glycero-3-phosphocholine + a fatty acid + H(+). The catalysed reaction is 1,2,3-tri-(9Z-octadecenoyl)-glycerol + H2O = di-(9Z)-octadecenoylglycerol + (9Z)-octadecenoate + H(+). It carries out the reaction 1,2,3-tributanoylglycerol + H2O = dibutanoylglycerol + butanoate + H(+). It catalyses the reaction 1,2-dihexadecanoyl-sn-glycero-3-phosphocholine + H2O = hexadecanoyl-sn-glycero-3-phosphocholine + hexadecanoate + H(+). With respect to regulation, inhibited by serum and NaCl. Functionally, exerts both phospholipase and triglyceride lipase activities. More active as a phospholipase than a triglyceride lipase. Hydrolyzes triglycerides, both with short-chain fatty acyl groups (tributyrin) and long-chain fatty acyl groups (triolein) with similar levels of activity toward both types of substrates. Hydrolyzes high density lipoproteins (HDL) more efficiently than other lipoproteins. The chain is Endothelial lipase (LIPG) from Homo sapiens (Human).